A 197-amino-acid chain; its full sequence is MTKQEKAENQEKPTEETVEETPKKETPFEPVMEADEVEETTEAQAPVEEADDKLAELQKKYDAMEDSFLRSQAEIKNIQMRNQKEQANLLKYDGQSLAKDVLPVLDNLERALAAEATDESLKKGVQMTYDHMKHALEDHGVKEIEAQGQAFDPTIHQAVQTVAVDGDQKADTVVQVFQKGYYLKDRVLRPAMVVVAQ.

Residues Met-1–Pro-27 show a composition bias toward basic and acidic residues. Residues Met-1–Ala-50 form a disordered region. Residues Met-32–Thr-41 show a composition bias toward acidic residues.

The protein belongs to the GrpE family. Homodimer.

The protein resides in the cytoplasm. Functionally, participates actively in the response to hyperosmotic and heat shock by preventing the aggregation of stress-denatured proteins, in association with DnaK and GrpE. It is the nucleotide exchange factor for DnaK and may function as a thermosensor. Unfolded proteins bind initially to DnaJ; upon interaction with the DnaJ-bound protein, DnaK hydrolyzes its bound ATP, resulting in the formation of a stable complex. GrpE releases ADP from DnaK; ATP binding to DnaK triggers the release of the substrate protein, thus completing the reaction cycle. Several rounds of ATP-dependent interactions between DnaJ, DnaK and GrpE are required for fully efficient folding. The protein is Protein GrpE of Latilactobacillus sakei (Lactobacillus sakei).